Here is a 165-residue protein sequence, read N- to C-terminus: CDP-archaeol synthase (165 aa).

3 helical membrane-spanning segments follow: residues 4–24 (IVQL…AVLA), 78–98 (LLDA…GAFV), and 118–138 (FLLM…PLLL).

The protein belongs to the CDP-archaeol synthase family. Requires Mg(2+) as cofactor.

The protein localises to the cell membrane. It catalyses the reaction 2,3-bis-O-(geranylgeranyl)-sn-glycerol 1-phosphate + CTP + H(+) = CDP-2,3-bis-O-(geranylgeranyl)-sn-glycerol + diphosphate. The protein operates within membrane lipid metabolism; glycerophospholipid metabolism. Its function is as follows. Catalyzes the formation of CDP-2,3-bis-(O-geranylgeranyl)-sn-glycerol (CDP-archaeol) from 2,3-bis-(O-geranylgeranyl)-sn-glycerol 1-phosphate (DGGGP) and CTP. This reaction is the third ether-bond-formation step in the biosynthesis of archaeal membrane lipids. The polypeptide is CDP-archaeol synthase (Pyrobaculum calidifontis (strain DSM 21063 / JCM 11548 / VA1)).